Consider the following 171-residue polypeptide: 6,7-dimethyl-8-ribityllumazine synthase (171 aa).

5-amino-6-(D-ribitylamino)uracil-binding positions include Phe24, 58 to 60, and 82 to 84; these read ALE and AVI. Residue 87–88 participates in (2S)-2-hydroxy-3-oxobutyl phosphate binding; it reads ET. His90 acts as the Proton donor in catalysis. Asn115 is a binding site for 5-amino-6-(D-ribitylamino)uracil. Residue Arg129 coordinates (2S)-2-hydroxy-3-oxobutyl phosphate. Residues 150 to 171 are disordered; that stretch reads ALDQLGDDEDEEEDEEDEEERA. A compositionally biased stretch (acidic residues) spans 154–171; it reads LGDDEDEEEDEEDEEERA.

It belongs to the DMRL synthase family.

The enzyme catalyses (2S)-2-hydroxy-3-oxobutyl phosphate + 5-amino-6-(D-ribitylamino)uracil = 6,7-dimethyl-8-(1-D-ribityl)lumazine + phosphate + 2 H2O + H(+). It participates in cofactor biosynthesis; riboflavin biosynthesis; riboflavin from 2-hydroxy-3-oxobutyl phosphate and 5-amino-6-(D-ribitylamino)uracil: step 1/2. Catalyzes the formation of 6,7-dimethyl-8-ribityllumazine by condensation of 5-amino-6-(D-ribitylamino)uracil with 3,4-dihydroxy-2-butanone 4-phosphate. This is the penultimate step in the biosynthesis of riboflavin. This Burkholderia ambifaria (strain MC40-6) protein is 6,7-dimethyl-8-ribityllumazine synthase.